A 402-amino-acid chain; its full sequence is MAVVKTTGKKDFDRSKEHINIGTIGHVDHGKTTLTAAISTVLAKKGLAEAKDYASIDAAPEEKARGITINTAHIEYSTDKRHYAHVDCPGHADYIKNMITGAAQMDGAILVVAATDGPMPQTREHILLSKQVGVPKMVVFLNKIDLLEGEEEMVDLVEVEIRELLSSYDFDGDNTPIIRGSARGALEGKPEWEAKVLELMDAVDSYIDSPVREMDKPFLMAVEDVFTITGRGTVATGKVERGQVKLNEEVEIVGYREEPKKTVITGIEMFNKNLQTAMAGDNAGVLLRGVDRKDIERGQVIAKPKTIIPHTKFKAAIYALKKEEGGRHTPFFKNYKPQFYFRTTDVTGGIEFEPGREMVIPGDNVDLTVELIAPIAVEQGTKFSIREGGRTVGAGTVTEIIK.

Residues 16 to 211 (KEHINIGTIG…AVDSYIDSPV (196 aa)) form the tr-type G domain. The tract at residues 25–32 (GHVDHGKT) is G1. 25–32 (GHVDHGKT) contacts GTP. Residue T32 coordinates Mg(2+). The tract at residues 66–70 (GITIN) is G2. A G3 region spans residues 87–90 (DCPG). GTP is bound by residues 87–91 (DCPGH) and 142–145 (NKID). The interval 142-145 (NKID) is G4. The tract at residues 181–183 (SAR) is G5.

Belongs to the TRAFAC class translation factor GTPase superfamily. Classic translation factor GTPase family. EF-Tu/EF-1A subfamily. Monomer.

The protein resides in the cytoplasm. The catalysed reaction is GTP + H2O = GDP + phosphate + H(+). Its function is as follows. GTP hydrolase that promotes the GTP-dependent binding of aminoacyl-tRNA to the A-site of ribosomes during protein biosynthesis. The chain is Elongation factor Tu from Mesomycoplasma hyopneumoniae (strain 232) (Mycoplasma hyopneumoniae).